The following is a 192-amino-acid chain: Ribosomal RNA small subunit methyltransferase G (192 aa).

Residues glycine 63, phenylalanine 68, 112-113, and arginine 125 each bind S-adenosyl-L-methionine; that span reads IE.

Belongs to the methyltransferase superfamily. RNA methyltransferase RsmG family.

It localises to the cytoplasm. It carries out the reaction guanosine(527) in 16S rRNA + S-adenosyl-L-methionine = N(7)-methylguanosine(527) in 16S rRNA + S-adenosyl-L-homocysteine. In terms of biological role, specifically methylates the N7 position of guanine in position 527 of 16S rRNA. This Rickettsia felis (strain ATCC VR-1525 / URRWXCal2) (Rickettsia azadi) protein is Ribosomal RNA small subunit methyltransferase G.